We begin with the raw amino-acid sequence, 266 residues long: Energy-coupling factor transporter transmembrane protein EcfT (266 aa).

7 helical membrane passes run valine 26–threonine 46, leucine 47–leucine 67, glycine 69–proline 89, leucine 116–threonine 136, leucine 151–isoleucine 171, serine 192–phenylalanine 212, and tyrosine 246–leucine 266.

Belongs to the energy-coupling factor EcfT family. In terms of assembly, forms a stable energy-coupling factor (ECF) transporter complex composed of 2 membrane-embedded substrate-binding proteins (S component), 2 ATP-binding proteins (A component) and 2 transmembrane proteins (T component). May be able to interact with more than 1 S component at a time.

It localises to the cell membrane. Its function is as follows. Transmembrane (T) component of an energy-coupling factor (ECF) ABC-transporter complex. Unlike classic ABC transporters this ECF transporter provides the energy necessary to transport a number of different substrates. This Heliobacterium modesticaldum (strain ATCC 51547 / Ice1) protein is Energy-coupling factor transporter transmembrane protein EcfT.